The primary structure comprises 456 residues: IQ domain-containing protein IQM3 (456 aa).

The 30-residue stretch at 46 to 75 folds into the IQ domain; sequence TRLAAVKVQKVYRSYRTRRRLADSVVVAEE. Residues 315–358 form a disordered region; sequence SEDSDSYDDYVKSNGGSEPEPLKKEDTTFQAETETDENGNGTVG.

In terms of tissue distribution, expressed in roots, rosette and cauline leaves, flowers and siliques, and at lower levels in stems.

It is found in the cytoplasm. It localises to the nucleus. In terms of biological role, may be involved in biotic and abiotic stress responses. The chain is IQ domain-containing protein IQM3 from Arabidopsis thaliana (Mouse-ear cress).